Here is a 399-residue protein sequence, read N- to C-terminus: Probable dual-specificity RNA methyltransferase RlmN (399 aa).

Glutamate 102 serves as the catalytic Proton acceptor. One can recognise a Radical SAM core domain in the interval 108-385 (YLDRATVCVS…CTVRVERGVA (278 aa)). A disulfide bridge connects residues cysteine 115 and cysteine 390. The [4Fe-4S] cluster site is built by cysteine 122, cysteine 126, and cysteine 129. S-adenosyl-L-methionine contacts are provided by residues 207–208 (GE), serine 239, 262–264 (SLH), and asparagine 347. Cysteine 390 functions as the S-methylcysteine intermediate in the catalytic mechanism.

Belongs to the radical SAM superfamily. RlmN family. [4Fe-4S] cluster is required as a cofactor.

The protein localises to the cytoplasm. It catalyses the reaction adenosine(2503) in 23S rRNA + 2 reduced [2Fe-2S]-[ferredoxin] + 2 S-adenosyl-L-methionine = 2-methyladenosine(2503) in 23S rRNA + 5'-deoxyadenosine + L-methionine + 2 oxidized [2Fe-2S]-[ferredoxin] + S-adenosyl-L-homocysteine. It carries out the reaction adenosine(37) in tRNA + 2 reduced [2Fe-2S]-[ferredoxin] + 2 S-adenosyl-L-methionine = 2-methyladenosine(37) in tRNA + 5'-deoxyadenosine + L-methionine + 2 oxidized [2Fe-2S]-[ferredoxin] + S-adenosyl-L-homocysteine. Functionally, specifically methylates position 2 of adenine 2503 in 23S rRNA and position 2 of adenine 37 in tRNAs. The sequence is that of Probable dual-specificity RNA methyltransferase RlmN from Roseiflexus castenholzii (strain DSM 13941 / HLO8).